The following is a 287-amino-acid chain: MKSFMHSKAVIFSFTMAFFLILAACSGKNEADSKDTGWEQIKDKGKIVVATSGTLYPTSYHDTDSGSDKLTGYEVEVVREAAKRLGLKVEFKEMGIDGMLTAVNSGQVDAAANDIDVTKDREEKFAFSTPYKYSYGTAIVRKDDLSGIKTLKDLKGKKAAGAATTVYMEVARKYGAKEVIYDNATNEQYLKDVANGRTDVILNDYYLQTLALAAFPDLNITIHPDIKYMPNKQALVMKKSNAALQKKMNEALKEMSKDGSLTKLSKQFFNKADVSKKIDADVQDVDL.

Positions 1–24 are cleaved as a signal peptide; sequence MKSFMHSKAVIFSFTMAFFLILAA. A lipid anchor (N-palmitoyl cysteine) is attached at Cys-25. Residue Cys-25 is the site of S-diacylglycerol cysteine attachment.

The protein belongs to the bacterial solute-binding protein 3 family.

It localises to the cell membrane. Functionally, probably part of a binding-protein-dependent transport system. The chain is Probable ABC transporter extracellular-binding protein YckB (yckB) from Bacillus subtilis (strain 168).